The following is a 483-amino-acid chain: Glycogen synthase kinase-3 alpha (483 aa).

Over residues 1-15 (MSGGGPSGGGPGGSG) the composition is skewed to gly residues. The tract at residues 1 to 96 (MSGGGPSGGG…PPPGVKLGRD (96 aa)) is disordered. S2 carries the N-acetylserine modification. S2 carries the phosphoserine modification. Phosphoserine; by PKB/AKT1 is present on S21. Positions 25–82 (PGGGGGGGGGGPGGSASGPGGTGGGKASVGAMGGGVGASSSGGGPSGSGGGGSGGPGA) are enriched in gly residues. Residues S72, S77, and S97 each carry the phosphoserine modification. Positions 119–403 (YTDIKVIGNG…PLEACAHSFF (285 aa)) constitute a Protein kinase domain. ATP is bound by residues 125 to 133 (IGNGSFGVV) and K148. D244 acts as the Proton acceptor in catalysis. Y279 carries the post-translational modification Phosphotyrosine. The tract at residues 443–483 (PHLRSPSGPATLTSSSQALTETQTGQDWQAPDATPTLTNSS) is disordered. A compositionally biased stretch (polar residues) spans 450–469 (GPATLTSSSQALTETQTGQD).

This sequence belongs to the protein kinase superfamily. CMGC Ser/Thr protein kinase family. GSK-3 subfamily. As to quaternary structure, monomer. Interacts with ARRB2, AXIN1 and CTNNB1/beta-catenin. Interacts with CTNND2. Interacts with LMBR1L. Interacts with DDX3X. Interacts with TNFRSF10B. Post-translationally, phosphorylated by AKT1 at Ser-21: upon insulin-mediated signaling, the activated PKB/AKT1 protein kinase phosphorylates and deactivates GSK3A, resulting in the dephosphorylation and activation of GYS1. Activated by phosphorylation at Tyr-279.

The catalysed reaction is L-seryl-[tau protein] + ATP = O-phospho-L-seryl-[tau protein] + ADP + H(+). The enzyme catalyses L-threonyl-[tau protein] + ATP = O-phospho-L-threonyl-[tau protein] + ADP + H(+). It carries out the reaction L-seryl-[protein] + ATP = O-phospho-L-seryl-[protein] + ADP + H(+). It catalyses the reaction L-threonyl-[protein] + ATP = O-phospho-L-threonyl-[protein] + ADP + H(+). Its activity is regulated as follows. Activated by phosphorylation at Tyr-279. In response to insulin, inhibited by phosphorylation at Ser-21 by PKB/AKT1; phosphorylation at this site causes a conformational change, preventing access of substrates to the active site. Inhibited by lithium. Its function is as follows. Constitutively active protein kinase that acts as a negative regulator in the hormonal control of glucose homeostasis, Wnt signaling and regulation of transcription factors and microtubules, by phosphorylating and inactivating glycogen synthase (GYS1 or GYS2), CTNNB1/beta-catenin, APC and AXIN1. Requires primed phosphorylation of the majority of its substrates. Contributes to insulin regulation of glycogen synthesis by phosphorylating and inhibiting GYS1 activity and hence glycogen synthesis. Regulates glycogen metabolism in liver, but not in muscle. May also mediate the development of insulin resistance by regulating activation of transcription factors. In Wnt signaling, regulates the level and transcriptional activity of nuclear CTNNB1/beta-catenin. Facilitates amyloid precursor protein (APP) processing and the generation of APP-derived amyloid plaques found in Alzheimer disease. May be involved in the regulation of replication in pancreatic beta-cells. Is necessary for the establishment of neuronal polarity and axon outgrowth. Through phosphorylation of the anti-apoptotic protein MCL1, may control cell apoptosis in response to growth factors deprivation. Acts as a regulator of autophagy by mediating phosphorylation of KAT5/TIP60 under starvation conditions, activating KAT5/TIP60 acetyltransferase activity and promoting acetylation of key autophagy regulators, such as ULK1 and RUBCNL/Pacer. Negatively regulates extrinsic apoptotic signaling pathway via death domain receptors. Promotes the formation of an anti-apoptotic complex, made of DDX3X, BRIC2 and GSK3B, at death receptors, including TNFRSF10B. The anti-apoptotic function is most effective with weak apoptotic signals and can be overcome by stronger stimulation. The chain is Glycogen synthase kinase-3 alpha (Gsk3a) from Rattus norvegicus (Rat).